A 303-amino-acid polypeptide reads, in one-letter code: N-acetyl-D-glucosamine kinase (303 aa).

ATP contacts are provided by residues 4–11 and 133–140; these read GFDIGGTK and GVGGGLIF. Zn(2+) is bound by residues His157, Cys177, Cys179, and Cys184.

This sequence belongs to the ROK (NagC/XylR) family. NagK subfamily.

It catalyses the reaction N-acetyl-D-glucosamine + ATP = N-acetyl-D-glucosamine 6-phosphate + ADP + H(+). The protein operates within cell wall biogenesis; peptidoglycan recycling. Its function is as follows. Catalyzes the phosphorylation of N-acetyl-D-glucosamine (GlcNAc) derived from cell-wall degradation, yielding GlcNAc-6-P. In Escherichia coli O81 (strain ED1a), this protein is N-acetyl-D-glucosamine kinase.